The following is a 354-amino-acid chain: C-C chemokine receptor type 5 (354 aa).

Topologically, residues 1–32 are extracellular; that stretch reads MDFQGSVPTYSYDIDYGMSAPCQKINVKQIAA. Serine 6 carries O-linked (GalNAc...) serine glycosylation. Residues tyrosine 10, tyrosine 12, and tyrosine 16 each carry the sulfotyrosine modification. Disulfide bonds link cysteine 22/cysteine 271 and cysteine 103/cysteine 180. Residues 33-60 traverse the membrane as a helical segment; that stretch reads QLLPPLYSLVFIFGFVGNMMVFLILISC. At 61–70 the chain is on the cytoplasmic side; it reads KKLKSVTDIY. Residues 71-91 traverse the membrane as a helical segment; the sequence is LLNLAISDLLFLLTLPFWAHY. The Extracellular portion of the chain corresponds to 92–104; that stretch reads AANEWVFGNIMCK. A helical membrane pass occupies residues 105–126; the sequence is VFTGLYHIGYFGGIFFIILLTI. The Cytoplasmic segment spans residues 127-143; the sequence is DRYLAIVHAVFALKVRT. Residues 144 to 168 form a helical membrane-spanning segment; the sequence is VNFGVITSVVTWAVAVFASLPEIIF. The Extracellular portion of the chain corresponds to 169-200; sequence TRSQKEGFHYTCSPHFPHTQYHFWKSFQTLKM. The chain crosses the membrane as a helical span at residues 201–220; the sequence is VILSLILPLLVMVICYSGIL. Topologically, residues 221–237 are cytoplasmic; the sequence is HTLFRCRNEKKRHRAVR. A helical membrane pass occupies residues 238–262; the sequence is LIFAIMIVYFLFWTPYNIVLLLTTF. Over 263 to 279 the chain is Extracellular; it reads QEFFGLNNCSSSNRLDQ. A helical transmembrane segment spans residues 280–303; the sequence is AMQATETLGMTHCCLNPVIYAFVG. At 304-354 the chain is on the cytoplasmic side; it reads EKFRSYLSVFFRKHMVKRFCKRCSIFQQDNPDRASSVYTRSTGEHEVSTGL. S-palmitoyl cysteine attachment occurs at residues cysteine 323 and cysteine 326. Phosphoserine; by BARK1 is present on residues serine 338, serine 339, serine 344, and serine 351.

Belongs to the G-protein coupled receptor 1 family. As to quaternary structure, interacts with PRAF2. Efficient ligand binding to CCL3/MIP-1alpha and CCL4/MIP-1beta requires sulfation, O-glycosylation and sialic acid modifications. Glycosylation on Ser-6 is required for efficient binding of CCL4. Interacts with GRK2. Interacts with ARRB1 and ARRB2. Interacts with CNIH4. Interacts with S100A4; this interaction stimulates T-lymphocyte chemotaxis. In terms of processing, sulfated on at least 2 of the N-terminal tyrosines. Sulfation is required for efficient binding of the chemokines, CCL3 and CCL4. O-glycosylated, but not N-glycosylated. Ser-6 appears to be the major site. Also sialylated glycans present which contribute to chemokine binding. Post-translationally, palmitoylation in the C-terminal is important for cell surface expression. In terms of processing, phosphorylation on serine residues in the C-terminal is stimulated by binding CC chemokines especially by APO-RANTES.

Its subcellular location is the cell membrane. In terms of biological role, receptor for a number of inflammatory CC-chemokines including CCL3/MIP-1-alpha, CCL4/MIP-1-beta and RANTES and subsequently transduces a signal by increasing the intracellular calcium ion level. May play a role in the control of granulocytic lineage proliferation or differentiation. Participates in T-lymphocyte migration to the infection site by acting as a chemotactic receptor. This chain is C-C chemokine receptor type 5 (Ccr5), found in Mus musculus (Mouse).